Reading from the N-terminus, the 216-residue chain is Cytochrome c biogenesis ATP-binding export protein CcmA (216 aa).

The ABC transporter domain occupies L18 to A216. G50–T57 provides a ligand contact to ATP.

This sequence belongs to the ABC transporter superfamily. CcmA exporter (TC 3.A.1.107) family. As to quaternary structure, the complex is composed of two ATP-binding proteins (CcmA) and two transmembrane proteins (CcmB).

The protein resides in the cell inner membrane. The enzyme catalyses heme b(in) + ATP + H2O = heme b(out) + ADP + phosphate + H(+). Functionally, part of the ABC transporter complex CcmAB involved in the biogenesis of c-type cytochromes; once thought to export heme, this seems not to be the case, but its exact role is uncertain. Responsible for energy coupling to the transport system. The protein is Cytochrome c biogenesis ATP-binding export protein CcmA of Nitrosococcus oceani (strain ATCC 19707 / BCRC 17464 / JCM 30415 / NCIMB 11848 / C-107).